The following is a 689-amino-acid chain: Glycine--tRNA ligase beta subunit (689 aa).

It belongs to the class-II aminoacyl-tRNA synthetase family. In terms of assembly, tetramer of two alpha and two beta subunits.

It is found in the cytoplasm. It catalyses the reaction tRNA(Gly) + glycine + ATP = glycyl-tRNA(Gly) + AMP + diphosphate. The chain is Glycine--tRNA ligase beta subunit from Sodalis glossinidius (strain morsitans).